The chain runs to 435 residues: Methylenetetrahydrofolate--tRNA-(uracil-5-)-methyltransferase TrmFO (435 aa).

Residue 9-14 (GAGLAG) participates in FAD binding.

The protein belongs to the MnmG family. TrmFO subfamily. It depends on FAD as a cofactor.

It is found in the cytoplasm. The catalysed reaction is uridine(54) in tRNA + (6R)-5,10-methylene-5,6,7,8-tetrahydrofolate + NADH + H(+) = 5-methyluridine(54) in tRNA + (6S)-5,6,7,8-tetrahydrofolate + NAD(+). It carries out the reaction uridine(54) in tRNA + (6R)-5,10-methylene-5,6,7,8-tetrahydrofolate + NADPH + H(+) = 5-methyluridine(54) in tRNA + (6S)-5,6,7,8-tetrahydrofolate + NADP(+). Catalyzes the folate-dependent formation of 5-methyl-uridine at position 54 (M-5-U54) in all tRNAs. The chain is Methylenetetrahydrofolate--tRNA-(uracil-5-)-methyltransferase TrmFO from Staphylococcus saprophyticus subsp. saprophyticus (strain ATCC 15305 / DSM 20229 / NCIMB 8711 / NCTC 7292 / S-41).